The chain runs to 379 residues: Pre-mRNA-processing protein 45 (379 aa).

Pro residues predominate over residues 1 to 10; it reads MFSNRLPPPK. Disordered stretches follow at residues 1 to 22 and 353 to 379; these read MFSN…ALSS and SEGA…NYGA. The span at 368–379 shows a compositional bias: basic and acidic residues; that stretch reads AESDDKSDNYGA.

It belongs to the SNW family. In terms of assembly, belongs to the CWC complex (or CEF1-associated complex), a spliceosome sub-complex reminiscent of a late-stage spliceosome composed of the U2, U5 and U6 snRNAs and at least BUD13, BUD31, BRR2, CDC40, CEF1, CLF1, CUS1, CWC2, CWC15, CWC21, CWC22, CWC23, CWC24, CWC25, CWC27, ECM2, HSH155, IST3, ISY1, LEA1, MSL1, NTC20, PRP8, PRP9, PRP11, PRP19, PRP21, PRP22, PRP45, PRP46, SLU7, SMB1, SMD1, SMD2, SMD3, SMX2, SMX3, SNT309, SNU114, SPP2, SYF1, SYF2, RSE1 and YJU2. Interacts with CLF1, PRP22 and PRP46. Interacts with SPP382.

Its subcellular location is the nucleus. Involved in pre-mRNA splicing. Associated with the spliceosome throughout the splicing reactions, until after the second catalytic step. In Saccharomyces cerevisiae (strain ATCC 204508 / S288c) (Baker's yeast), this protein is Pre-mRNA-processing protein 45 (PRP45).